The primary structure comprises 138 residues: Acidic phospholipase A2 BmooPLA2 (138 aa).

An N-terminal signal peptide occupies residues 1 to 16; the sequence is MRTLWIVAVLLLGVEG. Cystine bridges form between C42–C131, C44–C60, C59–C111, C65–C138, C66–C104, C73–C97, and C91–C102. Residues Y43, G45, and G47 each coordinate Ca(2+). Residue H63 is part of the active site. Residue D64 coordinates Ca(2+). The active site involves D105.

The protein belongs to the phospholipase A2 family. Group II subfamily. D49 sub-subfamily. It depends on Ca(2+) as a cofactor. In terms of tissue distribution, expressed by the venom gland.

Its subcellular location is the secreted. It carries out the reaction a 1,2-diacyl-sn-glycero-3-phosphocholine + H2O = a 1-acyl-sn-glycero-3-phosphocholine + a fatty acid + H(+). Snake venom phospholipase A2 (PLA2) that inhibits ADP- and collagen-induced platelet aggregation, has edema-inducing, anti-coagulant activity, antibacterial activity, and cytotoxic activity. In vivo, has a hypotensive effect. PLA2 catalyzes the calcium-dependent hydrolysis of the 2-acyl groups in 3-sn-phosphoglycerides. The chain is Acidic phospholipase A2 BmooPLA2 from Bothrops moojeni (Lance-headed viper).